We begin with the raw amino-acid sequence, 83 residues long: uncharacterized protein (83 aa).

A run of 2 helical transmembrane segments spans residues 11-31 (FYCIVTIPSAFVVLTVISFLL) and 48-68 (WHNLLFLIPFGLFFYPVHIWM).

The protein resides in the cell membrane. This is an uncharacterized protein from Bacillus subtilis (strain 168).